Here is a 494-residue protein sequence, read N- to C-terminus: Nuclear distribution protein PAC1 (494 aa).

In terms of domain architecture, LisH spans 14–46 (QKNELDKSVLRYLNWNYKQTVRHEHAQDYESVR). Positions 90 to 123 (NSIVRLQKKIIELEQNTETLVSQIKDLNTQVSEL) form a coiled coil. WD repeat units lie at residues 153–192 (NVES…IPLA), 196–244 (SHTK…CKFQ), 251–292 (GHEH…SLKT), 295–334 (PHSQ…SVGT), 347–395 (HFIE…LMAH), 415–454 (GHLS…HVWE), and 457–492 (HTGF…SNVF).

Belongs to the WD repeat LIS1/nudF family. In terms of assembly, self-associates. Interacts with NDL1 and dynein.

The protein localises to the cytoplasm. It localises to the cytoskeleton. The protein resides in the spindle pole. In terms of biological role, positively regulates the activity of the minus-end directed microtubule motor protein dynein. Plays a central role in positioning the mitotic spindle at the bud neck during cell division. Targets cytoplasmic dynein to microtubule plus ends, thereby promoting dynein-mediated microtubule sliding along the bud cortex and consequently the movement of the mitotic spindle to the bud neck. This is Nuclear distribution protein PAC1 from Saccharomyces cerevisiae (strain RM11-1a) (Baker's yeast).